The following is a 611-amino-acid chain: Sodium-coupled monocarboxylate transporter 1 (611 aa).

Residues 1-9 (MDASRDIGS) are Extracellular-facing. A helical membrane pass occupies residues 10-30 (FVVWDYVVFAGMLLISAAIGI). The Cytoplasmic portion of the chain corresponds to 31–51 (YYAFAGGGQQTSKDFLMGGRS). The helical transmembrane segment at 52-72 (MSAVPVALSLTASFMSAVTVL) threads the bilayer. The Extracellular portion of the chain corresponds to 73–86 (GTPAEVYRFGAIFS). Residues 87–107 (IFVITYFFVVVISAEVFLPVF) form a helical membrane-spanning segment. At 108–132 (YRLGITSTYEYLELRFNRCIRLCGT) the chain is on the cytoplasmic side. Residues 133 to 153 (ILFIVQTILYTGIVIYAPALA) traverse the membrane as a helical segment. Topologically, residues 154 to 161 (LNQVTGFD) are extracellular. A helical membrane pass occupies residues 162–182 (LWGAVVATGVVCTFYCTLGGL). Over 183-184 (KA) the chain is Cytoplasmic. The chain crosses the membrane as a helical span at residues 185-205 (VVWTDVFQVGIMVAGFASVII). Topologically, residues 206–239 (QASITQHGINKILSDAFNGGRLNFWNFDPNPLQR) are extracellular. Residues 240–260 (HTFWTIVIGGTFTWTTIYGVN) form a helical membrane-spanning segment. Residues 261–279 (QSQVQRYISCKSRLHAKLS) lie on the Cytoplasmic side of the membrane. The helical transmembrane segment at 280-300 (LYVNLVGLWVILTCSIFCGLA) threads the bilayer. The Extracellular segment spans residues 301 to 336 (LYSRYRECDPWTSKKVSAIDQLMPYLVLDILKNYPG). The chain crosses the membrane as a helical span at residues 337-359 (VPGLFVACAYSGTLSTVSSSINA). Topologically, residues 360–389 (LAAVTVEDLIKPRFKSLSEKSLSWISQGMS) are cytoplasmic. A helical transmembrane segment spans residues 390–410 (VLYGALCIGMAALASLMGALL). Topologically, residues 411–415 (QAALS) are extracellular. A helical transmembrane segment spans residues 416 to 436 (IFGMVGGPLLGLFSLGILVPF). At 437 to 439 (ANS) the chain is on the cytoplasmic side. A helical membrane pass occupies residues 440-460 (IGALTGLLAGFAISLWVGIGA). Topologically, residues 461–518 (QLYPPLPERTLPLPLETYGCNITHNGSDWMSTTEMPFSTSAFQIHNAERTPLMDNWYS) are extracellular. An N-linked (GlcNAc...) asparagine glycan is attached at asparagine 485. Residues 519–539 (LSYLYFSTIGTLTTLFVGILI) traverse the membrane as a helical segment. The Cytoplasmic segment spans residues 540–611 (SLSTGGRKQN…HSGKINGTRL (72 aa)). The PDZ-binding motif lies at 609 to 611 (TRL).

Belongs to the sodium:solute symporter (SSF) (TC 2.A.21) family. In terms of assembly, interacts (via PDZ-binding motif) with PDZK1 (via PDZ domains 1 and 3); interaction increases nicotinate transport activity of SLC5A8. Expressed in brain, colon, kidney and in the ileum and jejunum of small intestine. In the kidney, expression occurred in the proximal tubule and the loop of Henle, being restricted to tubular epithelial cells in both the cortex and the medulla. In the colon, predominantly expressed in the distal half of the large bowel and in the most terminal ileum. Localized selectively in the luminal surface of crypts in the large intestine and to the brush border in the middle parts of crypts in the cecum. In the brain, expression was seen throughout, exclusively in neurons, including the cortex, hippocampus, cerebellum and pituitary gland (at protein level). Expression is reduced in oligodendrogliomas.

It localises to the apical cell membrane. It catalyses the reaction (S)-lactate(out) + 2 Na(+)(out) = (S)-lactate(in) + 2 Na(+)(in). The catalysed reaction is propanoate(out) + 2 Na(+)(out) = propanoate(in) + 2 Na(+)(in). The enzyme catalyses pyruvate(out) + 2 Na(+)(out) = pyruvate(in) + 2 Na(+)(in). It carries out the reaction acetate(out) + 2 Na(+)(out) = acetate(in) + 2 Na(+)(in). It catalyses the reaction butanoate(out) + 2 Na(+)(out) = butanoate(in) + 2 Na(+)(in). The catalysed reaction is nicotinate(out) + 2 Na(+)(out) = nicotinate(in) + 2 Na(+)(in). The enzyme catalyses (R)-3-hydroxybutanoate(out) + 2 Na(+)(out) = (R)-3-hydroxybutanoate(in) + 2 Na(+)(in). It carries out the reaction acetoacetate(out) + 2 Na(+)(out) = acetoacetate(in) + 2 Na(+)(in). It catalyses the reaction 4-methyl-2-oxopentanoate(out) + 2 Na(+)(out) = 4-methyl-2-oxopentanoate(in) + 2 Na(+)(in). The catalysed reaction is 5-oxo-L-proline(out) + 2 Na(+)(out) = 5-oxo-L-proline(in) + 2 Na(+)(in). The enzyme catalyses iodide(out) = iodide(in). It carries out the reaction chloride(in) = chloride(out). It catalyses the reaction nitrate(in) = nitrate(out). The catalysed reaction is bromide(in) = bromide(out). Its activity is regulated as follows. Transport of D-lactate and pyruvate stimulated by alpha-cyano-4-hydroxycinnamic acid, but inhibited by the short-chain fatty acids acetate, propionate and butyrate. Its function is as follows. Acts as an electrogenic sodium (Na(+)) and chloride (Cl-)-dependent sodium-coupled solute transporter, including transport of monocarboxylates (short-chain fatty acids including L-lactate, D-lactate, pyruvate, acetate, propionate, valerate and butyrate), mocarboxylate drugs (nicotinate, benzoate, salicylate and 5-aminosalicylate) and ketone bodies (beta-D-hydroxybutyrate, acetoacetate and alpha-ketoisocaproate), with a Na(+):substrate stoichiometry of between 4:1 and 2:1. Catalyzes passive carrier mediated diffusion of iodide. Mediates iodide transport from the thyrocyte into the colloid lumen through the apical membrane. May be responsible for the absorption of D-lactate and monocarboxylate drugs from the intestinal tract. May play a critical role in the entry of L-lactate and ketone bodies into neurons by a process driven by an electrochemical Na(+) gradient and hence contribute to the maintenance of the energy status and function of neurons. Mediates sodium-coupled electrogenic transport of pyroglutamate (5-oxo-L-proline). Can mediate the transport of chloride, bromide, iodide and nitrate ions when external concentration of sodium ions is reduced. The polypeptide is Sodium-coupled monocarboxylate transporter 1 (Mus musculus (Mouse)).